We begin with the raw amino-acid sequence, 62 residues long: Sperm protamine P1 (62 aa).

The tract at residues 1–46 is disordered; that stretch reads MARCRRHSRSRSRSRNQCQRRRRRHYNRRRTYRRSRRHSRRRRVRR.

It belongs to the protamine P1 family. As to expression, testis.

It is found in the nucleus. The protein resides in the chromosome. Functionally, protamines substitute for histones in the chromatin of sperm during the haploid phase of spermatogenesis. They compact sperm DNA into a highly condensed, stable and inactive complex. The sequence is that of Sperm protamine P1 (PRM1) from Planigale gilesi (Flat-skulled marsupial mouse).